The primary structure comprises 359 residues: Putative nucleotidyltransferase MAB21L1 (359 aa).

A ribonucleoside 5'-triphosphate-binding positions include Arg23 to Lys24 and Phe63 to Leu66. 2 residues coordinate Mg(2+): Glu73 and Glu75. Residues Lys248 and Ser252–Lys255 contribute to the a ribonucleoside 5'-triphosphate site.

This sequence belongs to the mab-21 family. In terms of assembly, monomer. Homodecamer; composed of 2 back to back homopentamers. The protein may exist as monomer in solution and oiligomerizes upon ligand binding.

The protein resides in the nucleus. Putative nucleotidyltransferase required for several aspects of embryonic development including normal development of the eye. It is unclear whether it displays nucleotidyltransferase activity in vivo. Binds single-stranded RNA (ssRNA). The polypeptide is Putative nucleotidyltransferase MAB21L1 (mab21l1) (Danio rerio (Zebrafish)).